The sequence spans 402 residues: MALRPSKGDGSAGRWDRGAGKADFNAKRKKKVAEIHQALNSDPIDLAALRRMAISEGGLLTDEIRCQVWPKLLNVNTSEPPPVSRKDLRDMSKDYQQVLLDVRRSLRRFPPGMPDEQREGLQEELIDIILLVLDRNPQLHYYQGYHDIVVTFLLVVGERLATSLVEKLSTHHLRDFMDPTMDNTKHILNYLMPIIDQVSPELHDFMQSAEVGTIFALSWLITWFGHVLMDFRHVVRLYDFFLACHPLMPIYFAAVIVLYREQEVLDCDCDMASVHHLLSQIPQDLPYETLISRAGDLFVQFPPSELAREAAAQQEAERTAASTFKDFELASTQQRPDMVLRQRFRGLLRPEARTKDVLTKPRTNRFVKLAVMGLTVALGAAALAVVKSALEWAPKFQLQLFP.

The disordered stretch occupies residues 1 to 27 (MALRPSKGDGSAGRWDRGAGKADFNAK). Over residues 14–26 (RWDRGAGKADFNA) the composition is skewed to basic and acidic residues. The Rab-GAP TBC domain occupies 59-245 (LLTDEIRCQV…RLYDFFLACH (187 aa)). A run of 2 helical transmembrane segments spans residues 237–257 (LYDF…AVIV) and 366–386 (FVKL…LAVV).

Its subcellular location is the membrane. GTPase-activating protein specific for Rab1 and Rab2 small GTPase families for which it can accelerate the intrinsic GTP hydrolysis rate by more than five orders of magnitude. Also shows GAP activity for RAB18 GTPase. Promotes RAB18 dissociation from the endoplasmic reticulum (ER) membrane into the cytosol, probably through stimulating RAB18 GTP-hydrolysis. Involved in maintaining endoplasmic reticulum structure. The chain is TBC1 domain family member 20 from Mus musculus (Mouse).